We begin with the raw amino-acid sequence, 206 residues long: LexA repressor (206 aa).

Residues Val28–Ser48 constitute a DNA-binding region (H-T-H motif). Catalysis depends on for autocatalytic cleavage activity residues Ser128 and Lys166.

It belongs to the peptidase S24 family. In terms of assembly, homodimer.

The enzyme catalyses Hydrolysis of Ala-|-Gly bond in repressor LexA.. Functionally, represses a number of genes involved in the response to DNA damage (SOS response), including recA and lexA. In the presence of single-stranded DNA, RecA interacts with LexA causing an autocatalytic cleavage which disrupts the DNA-binding part of LexA, leading to derepression of the SOS regulon and eventually DNA repair. The sequence is that of LexA repressor from Bacillus thuringiensis (strain Al Hakam).